The sequence spans 337 residues: Trace amine-associated receptor 5 (337 aa).

Over 1-38 (MRAVLLPGSGEQPTAFCYQVNGSCPRTVHPLAIQVVIY) the chain is Extracellular. Residue N21 is glycosylated (N-linked (GlcNAc...) asparagine). 2 disulfides stabilise this stretch: C24-C188 and C99-C192. The helical transmembrane segment at 39-59 (LACAVGVLITVLGNLFVVFAV) threads the bilayer. The Cytoplasmic segment spans residues 60-70 (SYFKVLHTPTN). Residues 71-91 (FLLLSLALADMLLGLLVLPLS) form a helical membrane-spanning segment. At 92-109 (TVRSVESCWFFGDFLCRL) the chain is on the extracellular side. Residues 110-130 (HTYLDTLFCLTSIFHLCFISI) form a helical membrane-spanning segment. Residues 131–154 (DRHCAICDPLLYPSKFTVRTALRY) are Cytoplasmic-facing. Residues 155 to 175 (IVAGWGIPAAYTAFFLYTDVV) form a helical membrane-spanning segment. The extracellular Loop 2 (ECL2) stretch occupies residues 176–189 (ERALSQWLEEMPCV). At 176–204 (ERALSQWLEEMPCVGSCQLLFNKFWGWLN) the chain is on the extracellular side. A helical membrane pass occupies residues 205-225 (FPAFFVPCLIMISLYLKIFVV). The Cytoplasmic portion of the chain corresponds to 226 to 253 (ATRQAQQIRTLSQSLAGAVKRERKAAKT). The chain crosses the membrane as a helical span at residues 254-274 (LGIAVGIYLVCWLPFTVDTLV). At 275–284 (DSLLNFITPP) the chain is on the extracellular side. A helical transmembrane segment spans residues 285-307 (LVFDIFIWFAYFNSACNPIIYVF). Topologically, residues 308–337 (SYRWFRKALKLLLSREIFSPRTPTVDLYHD) are cytoplasmic.

It belongs to the G-protein coupled receptor 1 family. As to expression, specifically expressed in neurons of the olfactory epithelium, to discrete glomeruli predominantly localized to a confined bulb region. Present in the dorsal area of the main olfactory epithelium. Also present in the limbic brain areas receiving projection from the olfactory system and involved in the regulation of emotions. Also expressed in some brain regions outside the olfactory epithelium, such as the hippocampus, cerebellum, cortex, raphe nuclei, hypothalamus, and habenula.

Its subcellular location is the cell membrane. With respect to regulation, inhibited by 1-[(5,5- diphenyloxolan-2-yl)methyl]-4-(2-methoxyphenyl)piperazine and N-[(2,2-diphenyl-1,3-dioxolan-4-yl)methyl]-2-(2- methoxyphenoxy)ethan-1-amine small molecules. Its function is as follows. Olfactory receptor specific for trimethylamine, a trace amine enriched in the urine of male mice, playing a role in social behavior. Also activated by N-methylpiperidine. Trimethylamine is present at high concentration in the urine of male mice after puberty and acts as an attractant. Trimethylamine-binding causes a conformation change that triggers signaling via G(s)-class of G alpha proteins (GNAL or GNAS). Also required to provide olfactory input into limbic brain areas to regulate emotional behaviors likely via modulation of the serotonin system. The protein is Trace amine-associated receptor 5 of Mus musculus (Mouse).